The following is a 169-amino-acid chain: uncharacterized protein (169 aa).

A helical transmembrane segment spans residues 55–77 (SLFIFKAVMILHTCLIVKSIRIF).

The protein localises to the membrane. This is an uncharacterized protein from Saccharomyces cerevisiae (strain ATCC 204508 / S288c) (Baker's yeast).